A 394-amino-acid chain; its full sequence is Elongation factor Tu (394 aa).

Positions 10 to 204 (KPHVNIGTIG…AVDSYIPQPV (195 aa)) constitute a tr-type G domain. The G1 stretch occupies residues 19-26 (GHVDHGKT). GTP is bound at residue 19–26 (GHVDHGKT). T26 provides a ligand contact to Mg(2+). The tract at residues 60-64 (GITIS) is G2. The segment at 81 to 84 (DCPG) is G3. Residues 81 to 85 (DCPGH) and 136 to 139 (NKID) contribute to the GTP site. The G4 stretch occupies residues 136 to 139 (NKID). The tract at residues 174-176 (SAL) is G5.

Belongs to the TRAFAC class translation factor GTPase superfamily. Classic translation factor GTPase family. EF-Tu/EF-1A subfamily. As to quaternary structure, monomer.

The protein resides in the cytoplasm. The enzyme catalyses GTP + H2O = GDP + phosphate + H(+). Its function is as follows. GTP hydrolase that promotes the GTP-dependent binding of aminoacyl-tRNA to the A-site of ribosomes during protein biosynthesis. In Rickettsia conorii (strain ATCC VR-613 / Malish 7), this protein is Elongation factor Tu.